A 498-amino-acid polypeptide reads, in one-letter code: Swainsonine transporter swnT (498 aa).

Over residues 1-10 (MSLRNDEQTE) the composition is skewed to basic and acidic residues. Positions 1–21 (MSLRNDEQTEKGAVVGKVDSQ) are disordered. A run of 5 helical transmembrane segments spans residues 42–64 (LSAI…VLGT), 79–99 (LAMA…ISAI), 126–146 (AMIS…AVPV), 167–187 (FVVF…EYFL), and 193–213 (ALLL…FATA). N-linked (GlcNAc...) asparagine glycans are attached at residues Asn227 and Asn242. The next 6 membrane-spanning stretches (helical) occupy residues 272 to 292 (LIWT…AVLV), 316 to 336 (AAAI…VWSI), 370 to 390 (PIWS…LYLA), 398 to 418 (LIAT…ILVL), 436 to 456 (GFMA…FYCF), and 469 to 489 (YVSA…FLYA).

Belongs to the amino acid-polyamine-organocation (APC) superfamily. Amino acid/choline transporter (ACT) (TC 2.A.3.4) family.

The protein localises to the membrane. In terms of biological role, transmembrane transporter; part of the gene cluster that mediates the biosynthesis of swainsonine, a cytotoxic fungal alkaloid and a potential cancer therapy drug. Does not mediate the secretion of SW and the exact role of swnT in SW biosynthesis remains to be determined. This Arthroderma benhamiae (strain ATCC MYA-4681 / CBS 112371) (Trichophyton mentagrophytes) protein is Swainsonine transporter swnT.